Reading from the N-terminus, the 305-residue chain is Homoserine O-acetyltransferase (305 aa).

C142 functions as the Acyl-thioester intermediate in the catalytic mechanism. K163 and S192 together coordinate substrate. H235 functions as the Proton acceptor in the catalytic mechanism. E237 is an active-site residue. R249 serves as a coordination point for substrate.

The protein belongs to the MetA family.

The protein localises to the cytoplasm. It carries out the reaction L-homoserine + acetyl-CoA = O-acetyl-L-homoserine + CoA. It participates in amino-acid biosynthesis; L-methionine biosynthesis via de novo pathway; O-acetyl-L-homoserine from L-homoserine: step 1/1. Transfers an acetyl group from acetyl-CoA to L-homoserine, forming acetyl-L-homoserine. In Bacteroides fragilis (strain ATCC 25285 / DSM 2151 / CCUG 4856 / JCM 11019 / LMG 10263 / NCTC 9343 / Onslow / VPI 2553 / EN-2), this protein is Homoserine O-acetyltransferase.